Reading from the N-terminus, the 340-residue chain is Ribonucleoside-diphosphate reductase small subunit (340 aa).

Residues 180 to 200 form a helical membrane-spanning segment; the sequence is FILMILIEGIFFAASFAAIAY.

The protein belongs to the ribonucleoside diphosphate reductase small chain family. In terms of assembly, heterotetramer composed of a homodimer of the large subunit (R1) and a homodimer of the small subunit (R2). Larger multisubunit protein complex are also active, composed of (R1)n(R2)n. The cofactor is Fe cation.

It is found in the host membrane. The catalysed reaction is a 2'-deoxyribonucleoside 5'-diphosphate + [thioredoxin]-disulfide + H2O = a ribonucleoside 5'-diphosphate + [thioredoxin]-dithiol. Functionally, ribonucleoside-diphosphate reductase holoenzyme provides the precursors necessary for viral DNA synthesis. Allows virus growth in non-dividing cells, as well as reactivation from latency in infected hosts. Catalyzes the biosynthesis of deoxyribonucleotides from the corresponding ribonucleotides. In Human herpesvirus 1 (strain 17) (HHV-1), this protein is Ribonucleoside-diphosphate reductase small subunit.